Here is a 760-residue protein sequence, read N- to C-terminus: Amyloid beta precursor protein binding family B member 2 (760 aa).

Phosphoserine occurs at positions 123 and 160. 2 disordered regions span residues 177 to 295 and 324 to 351; these read QNLG…LPPG and PADL…KQPW. 2 stretches are compositionally biased toward polar residues: residues 212 to 230 and 261 to 275; these read NKPQ…SSSP and SWTT…PSSP. Residues 290-322 form the WW domain; the sequence is PDLPPGWKRVNDIAGTYYWHIPTGTTQWERPVS. Phosphoserine occurs at positions 334, 409, and 412. PID domains follow at residues 413–580 and 586–738; these read DPEA…LQVD and TELV…VTTN.

In terms of assembly, interacts (via C-terminus) with APP (via C-terminus). Interacts with APLP2 (via cytoplasmic domain). In terms of tissue distribution, expressed in the brain, retinal lens and muscle cells (at protein level).

The protein localises to the endoplasmic reticulum. It is found in the golgi apparatus. It localises to the early endosome. Functionally, plays a role in the maintenance of lens transparency, and may also play a role in muscle cell strength. Involved in hippocampal neurite branching and neuromuscular junction formation, as a result plays a role in spatial memory functioning. Activates transcription of APP. In Mus musculus (Mouse), this protein is Amyloid beta precursor protein binding family B member 2.